Reading from the N-terminus, the 1669-residue chain is Collagen alpha-1(IV) chain (1669 aa).

A signal peptide spans 1-27 (MGPRLGVWLLLLLAALLLHEESSRAAA). Residues 28 to 172 (KGGCAGSGCG…LGHIPGTLLK (145 aa)) constitute a propeptide, N-terminal propeptide (7S domain). A disordered region spans residues 50-1445 (ERGLPGLQGV…PPGTPSVDHG (1396 aa)). Positions 173–1440 (GERGYPGQPG…PGSMGPPGTP (1268 aa)) are triple-helical region. The segment covering 196-214 (VGPPGFTGPPGPPGPPGPP) has biased composition (pro residues). 3 positions are modified to 3-hydroxyproline: P204, P207, and P210. Basic and acidic residues-rich tracts occupy residues 254–263 (TAMRGEKGQK) and 289–298 (PGKDGEKGEK). Residues 347 to 356 (GYPGGPGAKG) show a composition bias toward gly residues. The segment covering 357 to 366 (ETGPKGFPGI) has biased composition (low complexity). A compositionally biased stretch (pro residues) spans 367–376 (PGQPGPPGFP). The segment covering 396 to 412 (PGLPGVSLPGPSGRDGL) has biased composition (low complexity). Pro residues-rich tracts occupy residues 413 to 424 (PGPPGPPGPPGQ) and 436 to 448 (PGPP…PGIP). Low complexity predominate over residues 485 to 494 (PGEIGFPGQP). Basic and acidic residues-rich tracts occupy residues 497–508 (KGDRGLPGRDGL) and 535–545 (FDIRLKGDKGD). Residues 586 to 595 (GPPGGVGFPG) are compositionally biased toward gly residues. P587 and P602 each carry 3-hydroxyproline. The residue at position 603 (P603) is a 4-hydroxyproline. P605 is modified (3-hydroxyproline). 4-hydroxyproline is present on residues P606, P623, P626, P629, and P632. At P647 the chain carries 3-hydroxyproline. 2 stretches are compositionally biased toward gly residues: residues 758-767 (GNVGGPGIPG) and 797-817 (GVPG…GPPG). Positions 847–871 (SQGLPGLTGQSGLPGLPGQQGTPGQ) are enriched in low complexity. Residues 937 to 955 (SMDKVDMGSMKGEKGDQGE) show a composition bias toward basic and acidic residues. Residues 1011–1020 (GSAGGMGLPG) are compositionally biased toward gly residues. Composition is skewed to low complexity over residues 1030 to 1040 (IPGPQGIPGLP), 1101 to 1114 (SPGS…PGLP), and 1193 to 1212 (FPGL…QGFM). Position 1214 is a 3-hydroxyproline (P1214). The segment covering 1247–1258 (PGRPGPMGPPGL) has biased composition (pro residues). Residues 1290–1299 (GMPGIGGSPG) show a composition bias toward gly residues. The span at 1413 to 1428 (FGPPGPRGFPGPPGPD) shows a compositional bias: pro residues. Position 1424 is a 3-hydroxyproline (P1424). Positions 1445 to 1669 (GFLVTRHSQT…SRCQVCMRRT (225 aa)) constitute a Collagen IV NC1 domain. 6 disulfides stabilise this stretch: C1460–C1551, C1493–C1548, C1505–C1511, C1570–C1665, C1604–C1662, and C1616–C1622. M1533 is covalently cross-linked (S-Lysyl-methionine sulfilimine (Met-Lys) (interchain with K-1651)). An S-Lysyl-methionine sulfilimine (Lys-Met) (interchain with M-1533) cross-link involves residue K1651.

This sequence belongs to the type IV collagen family. There are six type IV collagen isoforms, alpha 1(IV)-alpha 6(IV), each of which can form a triple helix structure with 2 other chains to generate type IV collagen network. Interacts with EFEMP2. Post-translationally, lysines at the third position of the tripeptide repeating unit (G-X-Y) are hydroxylated in all cases. The modified lysines can be O-glycosylated. In terms of processing, contains 4-hydroxyproline. Prolines at the third position of the tripeptide repeating unit (G-X-Y) are hydroxylated in some or all of the chains. Contains 3-hydroxyproline. This modification occurs on the first proline residue in the sequence motif Gly-Pro-Hyp, where Hyp is 4-hydroxyproline. Post-translationally, type IV collagens contain numerous cysteine residues which are involved in inter- and intramolecular disulfide bonding. 12 of these, located in the NC1 domain, are conserved in all known type IV collagens. In terms of processing, the trimeric structure of the NC1 domains is stabilized by covalent bonds (sulfilimine cross-links) between Lys and Met residues. These cross-links are important for the mechanical stability of the basement membrane. Sulfilimine cross-link is catalyzed by PXDN. Proteolytic processing produces the C-terminal NC1 peptide, arresten.

The protein localises to the secreted. The protein resides in the extracellular space. It localises to the extracellular matrix. Its subcellular location is the basement membrane. In terms of biological role, type IV collagen is the major structural component of glomerular basement membranes (GBM), forming a 'chicken-wire' meshwork together with laminins, proteoglycans and entactin/nidogen. Functionally, arresten, comprising the C-terminal NC1 domain, inhibits angiogenesis and tumor formation. The C-terminal half is found to possess the anti-angiogenic activity. Specifically inhibits endothelial cell proliferation, migration and tube formation. This chain is Collagen alpha-1(IV) chain, found in Bos taurus (Bovine).